A 314-amino-acid chain; its full sequence is tRNA dimethylallyltransferase (314 aa).

Position 9-16 (9-16 (GPTAVGKT)) interacts with ATP. 11 to 16 (TAVGKT) lines the substrate pocket. The interval 34 to 37 (DSVQ) is interaction with substrate tRNA.

Belongs to the IPP transferase family. Monomer. The cofactor is Mg(2+).

The enzyme catalyses adenosine(37) in tRNA + dimethylallyl diphosphate = N(6)-dimethylallyladenosine(37) in tRNA + diphosphate. In terms of biological role, catalyzes the transfer of a dimethylallyl group onto the adenine at position 37 in tRNAs that read codons beginning with uridine, leading to the formation of N6-(dimethylallyl)adenosine (i(6)A). The polypeptide is tRNA dimethylallyltransferase (Desulfitobacterium hafniense (strain DSM 10664 / DCB-2)).